The chain runs to 159 residues: TDQQAEARSYLSEEMIAEFKAAFDMFDADGGGDISVKELGTVMRMLGQTPTKEELDAIIEEVDEDGSGTIDFEEFLVMMVRQMKEDAKGKSEEELAECFRIFDRNMDGYIDAEELAEIFRASGEHVTDEEIESIMKDGDKNNDGRIDFDEFLKMMEGVQ.

Residue Thr1 is modified to N-acetylthreonine. 4 EF-hand domains span residues 14–49 (EMIA…LGQT), 50–85 (PTKE…QMKE), 90–125 (KSEE…SGEH), and 126–159 (VTDE…EGVQ). Residues Asp27, Asp29, Asp33, Glu38, Asp63, Asp65, Ser67, Thr69, Glu74, Asp103, Asn105, Asp107, Tyr109, Glu114, Asp139, Asn141, Asp143, Arg145, and Glu150 each coordinate Ca(2+).

It belongs to the troponin C family.

Its function is as follows. Troponin is the central regulatory protein of striated muscle contraction. Tn consists of three components: Tn-I which is the inhibitor of actomyosin ATPase, Tn-T which contains the binding site for tropomyosin and Tn-C. The binding of calcium to Tn-C abolishes the inhibitory action of Tn on actin filaments. This Sus scrofa (Pig) protein is Troponin C, skeletal muscle (TNNC2).